A 233-amino-acid polypeptide reads, in one-letter code: Proteasome subunit beta type-6 (233 aa).

A propeptide spans 1–12 (removed in mature form); the sequence is MDLNLDAPHSMG. Thr13 (nucleophile) is an active-site residue.

It belongs to the peptidase T1B family. In terms of assembly, component of the 20S core complex of the 26S proteasome. The 26S proteasome is composed of a core protease (CP), known as the 20S proteasome, capped at one or both ends by the 19S regulatory particle (RP/PA700). The 20S proteasome core is composed of 28 subunits that are arranged in four stacked rings, resulting in a barrel-shaped structure. The two end rings are each formed by seven alpha subunits, and the two central rings are each formed by seven beta subunits. The catalytic chamber with the active sites is on the inside of the barrel.

The protein localises to the cytoplasm. It localises to the nucleus. It carries out the reaction Cleavage of peptide bonds with very broad specificity.. In terms of biological role, the proteasome is a multicatalytic proteinase complex which is characterized by its ability to cleave peptides with Arg, Phe, Tyr, Leu, and Glu adjacent to the leaving group at neutral or slightly basic pH. The proteasome has an ATP-dependent proteolytic activity. The sequence is that of Proteasome subunit beta type-6 (PBA1) from Arabidopsis thaliana (Mouse-ear cress).